Reading from the N-terminus, the 283-residue chain is Diaminopimelate epimerase (283 aa).

Residues Asn-13 and Asn-66 each coordinate substrate. Cys-75 acts as the Proton donor in catalysis. Residues 76–77 (GN), Asn-165, Asn-198, and 216–217 (ER) contribute to the substrate site. Cys-225 functions as the Proton acceptor in the catalytic mechanism. 226-227 (GT) is a substrate binding site.

It belongs to the diaminopimelate epimerase family. Homodimer.

It localises to the cytoplasm. The catalysed reaction is (2S,6S)-2,6-diaminopimelate = meso-2,6-diaminopimelate. It functions in the pathway amino-acid biosynthesis; L-lysine biosynthesis via DAP pathway; DL-2,6-diaminopimelate from LL-2,6-diaminopimelate: step 1/1. Catalyzes the stereoinversion of LL-2,6-diaminopimelate (L,L-DAP) to meso-diaminopimelate (meso-DAP), a precursor of L-lysine and an essential component of the bacterial peptidoglycan. The sequence is that of Diaminopimelate epimerase from Acaryochloris marina (strain MBIC 11017).